A 1049-amino-acid chain; its full sequence is MLRSYLHLGRHRTPAFRQPLGRLLRPTASILQYAQSRTLASVSSLESLPEVGDQLHGFTVQEKKQVPELHLTAIRLRHDKTHADYLHIAREDKNNVFGIGFKTNPPDATGVPHILEHTTLCGSEKYPIRDPFFKMLPRSLSNFMNAFTSSDHTMYPFATTNQQDFQNLLSVYLDATMHPLLKEEDFRQEGWRLGPEDPRAIQTQEGNLKPEDILFKGVVYNEMKGQMSDANYLYWIRFQESIFPAINNSGGDPQHITDLTHKQLVEFSKKNYNPSNAKIITYGDMPLADHLKQVGGVLNDFSKGAVDTTVKLPIELRGPINVTVPGPIDTFVSEDRQFKTSTSWYMGDITDTVETFSAGILSSLLLDGYGSPMYKALIESGLGSSFTPNTGLDTSGKIPIFSIGVTGVSEEQAPRVKEEIQRVLQETLQRGFNDEKVQGFLHQLELALRHKTANFGLGVIQKTFTSWFNGSDPMKELAWNEVINAFKSRYEKGGYLEALMQKYLINDNCLTFTMVGTPSFNKELDDKEMARKEKKFEQLTQQHGSVEKAVTELAKAELQLLEVQEKAQHADLSCLPSLRVEDISRQKEHKPVRESKVEGTDIVWREAPTNGLTYFQAVNAFADLPDDLRLLLPLFNDAIMRLGTPTRTMEQWEDLIKLKTGGVSTSNFHTTSPTEMGKYTEGLQFSGFALDKNVPDMLEILTALVTETDFTSPSAPAMIQELLRLTTNGALDAVAGTGHRYALNAAAAGLSRSFWAQEQTSGLAQLQATANLLRDAETSPERLAELIEKLRLIQSFAISKTSGLRVRLVCEPASSTQNESVLQRWVTGLPKVPSPTSQPQRFDLSTPSKKAFYDLPYKVYYSGLALPTVPFTHSSSATLSVLSQLLTHNYLHPEIREKGGAYGAGASNGPVKGLFAFTSYRDPNPANTLKVFKNSGVFARDRAWSDREINEAKLGIFQGLDAPVSVDEEGSRYFLNGITHEMDQRWREQVLDVTAKDVNEVAQTFLVDGTRRSVCLLGEKKDWAESEGWEVRKLSMNPNGSNIPSGDAA.

A mitochondrion-targeting transit peptide spans 1–39; it reads MLRSYLHLGRHRTPAFRQPLGRLLRPTASILQYAQSRTL. Position 113 (His-113) interacts with Zn(2+). Residue Glu-116 is the Proton acceptor of the active site. A Zn(2+)-binding site is contributed by His-117. Glu-189 is an active-site residue. Position 222 (Glu-222) interacts with Zn(2+).

It belongs to the peptidase M16 family. PreP subfamily. As to quaternary structure, monomer and homodimer; homodimerization is induced by binding of the substrate. Requires Zn(2+) as cofactor.

The protein resides in the mitochondrion intermembrane space. The protein localises to the mitochondrion matrix. Degrades mitochondrial transit peptides after their cleavage in the intermembrane space or in the matrix, and presequence peptides; clearance of these peptides is required to keep the presequence processing machinery running. Preferentially cleaves the N-terminal side of paired basic amino acid residues. Also degrades other unstructured peptides. May function as an ATP-dependent peptidase as opposed to a metalloendopeptidase. In Emericella nidulans (strain FGSC A4 / ATCC 38163 / CBS 112.46 / NRRL 194 / M139) (Aspergillus nidulans), this protein is Presequence protease, mitochondrial (cym1).